The following is a 356-amino-acid chain: NAC domain-containing protein JA2L (356 aa).

Positions 14–162 (LPPGFRFYPT…DWVLCRIYKK (149 aa)) constitute an NAC domain. A DNA-binding region spans residues 111 to 168 (VGIKKALVFYIGKAPKGTKTNWIMHEYRLSEPTTKTGSSRLDDWVLCRIYKKNSGGQK). The tract at residues 163–191 (NSGGQKSSCSDLQNKDISHASSSSSSSQF) is disordered. Over residues 164–174 (SGGQKSSCSDL) the composition is skewed to polar residues.

As to expression, expressed in guard cells of the epidermis.

The protein localises to the nucleus. Its function is as follows. Transcription factor that acts downstream of MYC2 in the jasmonate-mediated response to Botrytis cinerea infection. With MYC2 forms a transcription module that regulates wounding-responsive genes. Involved in jasmonate- and coronatine-mediated stomatal reopening in response to Pseudomonas syringae pv tomato DC3000 infection. Regulates the expression of threonine deaminase 2 (TD2) through promoter binding. In Solanum lycopersicum (Tomato), this protein is NAC domain-containing protein JA2L.